A 318-amino-acid chain; its full sequence is Apo-salmochelin esterase (318 aa).

The helical transmembrane segment at 13–32 (KAIFFHLSCLTLICSAQVYA) threads the bilayer. Active-site residues include Ser189 and His287.

Belongs to the esterase D family. In terms of assembly, monomer.

The protein localises to the cell inner membrane. The enzyme catalyses enterobactin + H2O = N-(2,3-dihydroxybenzoyl)-L-serine trimer. It catalyses the reaction monoglucosyl-enterobactin + H2O = [N-(2,3-dihydroxybenzoyl)-L-seryl]2-N-(C-5-[deoxy-beta-D-glucosyl]-2,3-dihydroxybenzoyl)-L-serine + H(+). It carries out the reaction diglucosyl-enterobactin + H2O = N-(2,3-dihydroxybenzoyl)-L-seryl-[N-(C-5-[deoxy-beta-D-glucosyl]-2,3-dihydroxybenzoyl)-L-serine]2 + H(+). The catalysed reaction is triglucosyl-enterobactin + H2O = [N-(C-5-[deoxy-beta-D-glucosyl]-2,3-dihydroxybenzoyl)-L-serine]3 + H(+). Its function is as follows. Catalyzes the hydrolysis of both the apo and Fe3(+)-bound forms of enterobactin (Ent), monoglucosyl-C-Ent (MGE), diglucosyl-C-Ent (DGE) and triglucosyl-C-Ent (TGE). It prefers apo siderophores as substrates and hydrolyzes the Fe3(+)-bound siderophores very inefficiently. Tends to hydrolyze the trilactone just once to produce linearized trimers. May hydrolyze and linearize some or all of apo enterobactins while they are being exported. This chain is Apo-salmochelin esterase, found in Escherichia coli O6:H1 (strain CFT073 / ATCC 700928 / UPEC).